Consider the following 633-residue polypeptide: Chaperone protein HtpG (633 aa).

The a; substrate-binding stretch occupies residues 1 to 345; the sequence is MSADTQSETL…SDDLPLNISR (345 aa). The interval 346–562 is b; sequence EMLQHNPMIS…EYDFGMGMQR (217 aa). The tract at residues 563–633 is c; that stretch reads LLQAAGHQLP…VRRVNNLLAG (71 aa).

The protein belongs to the heat shock protein 90 family. As to quaternary structure, homodimer.

It localises to the cytoplasm. Functionally, molecular chaperone. Has ATPase activity. This is Chaperone protein HtpG from Halorhodospira halophila (strain DSM 244 / SL1) (Ectothiorhodospira halophila (strain DSM 244 / SL1)).